Consider the following 443-residue polypeptide: Thymidine phosphorylase (443 aa).

It belongs to the thymidine/pyrimidine-nucleoside phosphorylase family. Homodimer.

It carries out the reaction thymidine + phosphate = 2-deoxy-alpha-D-ribose 1-phosphate + thymine. The protein operates within pyrimidine metabolism; dTMP biosynthesis via salvage pathway; dTMP from thymine: step 1/2. In terms of biological role, the enzymes which catalyze the reversible phosphorolysis of pyrimidine nucleosides are involved in the degradation of these compounds and in their utilization as carbon and energy sources, or in the rescue of pyrimidine bases for nucleotide synthesis. This chain is Thymidine phosphorylase, found in Shewanella piezotolerans (strain WP3 / JCM 13877).